Reading from the N-terminus, the 69-residue chain is uncharacterized protein (69 aa).

This is an uncharacterized protein from Saccharomyces cerevisiae (strain ATCC 204508 / S288c) (Baker's yeast).